Reading from the N-terminus, the 302-residue chain is Spermidine synthase (302 aa).

N-acetylmethionine is present on methionine 1. Residues 18–253 (EGWFRETCSL…GQIGFMLCSK (236 aa)) enclose the PABS domain. Residue glutamine 49 coordinates S-adenosyl 3-(methylsulfanyl)propylamine. Tyrosine 79 contributes to the putrescine binding site. Residues glutamine 80, aspartate 104, glutamate 124, 155–156 (DG), and aspartate 173 each bind S-adenosyl 3-(methylsulfanyl)propylamine. The Proton acceptor role is filled by aspartate 173. Residues 173–176 (DSSD) and tyrosine 241 contribute to the putrescine site.

This sequence belongs to the spermidine/spermine synthase family. As to quaternary structure, homodimer or homotetramer.

The enzyme catalyses S-adenosyl 3-(methylsulfanyl)propylamine + putrescine = S-methyl-5'-thioadenosine + spermidine + H(+). The protein operates within amine and polyamine biosynthesis; spermidine biosynthesis; spermidine from putrescine: step 1/1. With respect to regulation, the activity is thought to be regulated mainly by the availability of decarboxylated S-adenosylmethionine. In terms of biological role, catalyzes the production of spermidine from putrescine and decarboxylated S-adenosylmethionine (dcSAM). Has a strong preference for putrescine as substrate, and has very low activity towards 1,3-diaminopropane. Has extremely low activity towards spermidine. The chain is Spermidine synthase (SRM) from Homo sapiens (Human).